The primary structure comprises 355 residues: Protein pelota homolog (355 aa).

This sequence belongs to the eukaryotic release factor 1 family. Pelota subfamily. As to quaternary structure, monomer. A divalent metal cation serves as cofactor.

The protein resides in the cytoplasm. Functionally, may function in recognizing stalled ribosomes, interact with stem-loop structures in stalled mRNA molecules, and effect endonucleolytic cleavage of the mRNA. May play a role in the release non-functional ribosomes and degradation of damaged mRNAs. Has endoribonuclease activity. The protein is Protein pelota homolog of Natronomonas pharaonis (strain ATCC 35678 / DSM 2160 / CIP 103997 / JCM 8858 / NBRC 14720 / NCIMB 2260 / Gabara) (Halobacterium pharaonis).